The following is a 364-amino-acid chain: Transcription factor TGA4 (364 aa).

The interval 39 to 79 (PGSIIIPTNEKPDSLSEDTSHGTEGTPHKFDQEASTSRHPD) is disordered. Over residues 48-79 (EKPDSLSEDTSHGTEGTPHKFDQEASTSRHPD) the composition is skewed to basic and acidic residues. In terms of domain architecture, bZIP spans 78-141 (PDKIQRRLAQ…NGVDTNALSF (64 aa)). 2 coiled-coil regions span residues 79-127 (DKIQ…RQQG) and 257-277 (NLRQ…EKLQ). A basic motif region spans residues 80–100 (KIQRRLAQNREAARKSRLRKK). A leucine-zipper region spans residues 106 to 120 (LETSRLKLIHLEQEL). Residues 149–359 (IVAFEMEYGH…RALSSSWAAR (211 aa)) enclose the DOG1 domain. The cysteines at positions 256 and 262 are disulfide-linked.

Belongs to the bZIP family. In terms of assembly, binds DNA as a dimer. Interaction with the Dof domain proteins OBP1, OBP2 or OBP3 enhances the binding to the ocs element. Interacts with RAP2-3/EPB, an ethylene-responsive element binding protein. The reduced form interacts with NPR1. In terms of tissue distribution, predominantly expressed in roots.

It localises to the nucleus. Transcriptional activator that binds specifically to the DNA sequence 5'-TGACG-3'. Recognizes ocs elements like the as-1 motif of the cauliflower mosaic virus 35S promoter. Binding to the as-1-like cis elements mediate auxin- and salicylic acid-inducible transcription. May be involved in the induction of the systemic acquired resistance (SAR) via its interaction with NPR1. Could also bind to the Hex-motif (5'-TGACGTGG-3') another cis-acting element found in plant histone promoters. The chain is Transcription factor TGA4 (TGA4) from Arabidopsis thaliana (Mouse-ear cress).